Here is a 686-residue protein sequence, read N- to C-terminus: 3',5'-cyclic-AMP phosphodiesterase 4C (686 aa).

Phosphoserine is present on residues serine 9, serine 28, serine 40, and serine 83. Disordered stretches follow at residues 88–116 (NGLP…VHHV) and 124–143 (YRSD…TSSA). Over residues 124-133 (YRSDSDHEPS) the composition is skewed to basic and acidic residues. The PDEase domain maps to 313–642 (VQTDQEEQLA…EWYQSRIPCS (330 aa)). Histidine 389 acts as the Proton donor in catalysis. Residue histidine 389 coordinates 3',5'-cyclic AMP. Residues histidine 389 and histidine 393 each coordinate AMP. Positions 393, 429, 430, and 547 each coordinate Zn(2+). AMP-binding residues include aspartate 430, aspartate 547, glutamine 598, and phenylalanine 601. Aspartate 430 lines the Mg(2+) pocket. Aspartate 430 serves as a coordination point for Mn(2+). Residues glutamine 598 and phenylalanine 601 each contribute to the 3',5'-cyclic AMP site. Residue serine 642 is modified to Phosphoserine. The span at 660-671 (EAEEEEEEEDEG) shows a compositional bias: acidic residues. Positions 660-686 (EAEEEEEEEDEGQCTALNRESSELPST) are disordered. The segment covering 674–686 (TALNRESSELPST) has biased composition (polar residues).

Belongs to the cyclic nucleotide phosphodiesterase family. PDE4 subfamily. In terms of assembly, part of a complex containing AKAP5, ADCY5, ADCY6 and PKD2. Zn(2+) is required as a cofactor. Mg(2+) serves as cofactor. The cofactor is Mn(2+).

Its subcellular location is the cell projection. It localises to the cilium. It catalyses the reaction 3',5'-cyclic AMP + H2O = AMP + H(+). It participates in purine metabolism; 3',5'-cyclic AMP degradation; AMP from 3',5'-cyclic AMP: step 1/1. In terms of biological role, hydrolyzes the second messenger cAMP, which is a key regulator of many important physiological processes. This is 3',5'-cyclic-AMP phosphodiesterase 4C from Mus musculus (Mouse).